The following is a 502-amino-acid chain: 1-aminocyclopropane-1-carboxylate synthase-like protein 1 (502 aa).

The disordered stretch occupies residues 15–35; that stretch reads CPGSDSIQDLPSNKGDGLERE. Glu106 serves as a coordination point for substrate. Lys324 carries the post-translational modification N6-(pyridoxal phosphate)lysine.

It belongs to the class-I pyridoxal-phosphate-dependent aminotransferase family.

Functionally, does not catalyze the synthesis of 1-aminocyclopropane-1-carboxylate but is capable of catalyzing the deamination of L-vinylglycine. The protein is 1-aminocyclopropane-1-carboxylate synthase-like protein 1 (ACCS) of Bos taurus (Bovine).